Consider the following 165-residue polypeptide: Neurotrophin-3 (165 aa).

An N-terminal signal peptide occupies residues 1 to 3 (IQS). The propeptide occupies 4–119 (TSMDQGSLSE…VLTXTSXXXR (116 aa)).

The protein belongs to the NGF-beta family.

The protein resides in the secreted. In terms of biological role, seems to promote the survival of visceral and proprioceptive sensory neurons. This is Neurotrophin-3 (NTF3) from Tropidophis haetianus (Haitian dwarf boa).